We begin with the raw amino-acid sequence, 272 residues long: Neurogenin-2 (272 aa).

The disordered stretch occupies residues 30–69 (LTPLSSSADEEEEEEPGASGGARRQRGAEAGQGARGGVAA). One can recognise a bHLH domain in the interval 112-164 (TRRLKANNRERNRMHNLNAALDALREVLPTFPEDAKLTKIETLRFAHNYIWAL). A compositionally biased stretch (low complexity) spans 197–239 (ASAALSSSGDSPSPASTWSCTNSPAPSSSVSSNSTSPYSCTLS). The disordered stretch occupies residues 197–264 (ASAALSSSGD…PPDKHRYAPH (68 aa)).

In terms of assembly, efficient DNA binding requires dimerization with another bHLH protein.

It localises to the nucleus. Its function is as follows. Transcriptional regulator. Involved in neuronal differentiation. Activates transcription by binding to the E box (5'-CANNTG-3'). In Homo sapiens (Human), this protein is Neurogenin-2 (NEUROG2).